Reading from the N-terminus, the 459-residue chain is MTSPAKFKKDKEIIAEYDTQVKEIRAQLTEQMKCLDQQCELRVQLLQDLQDFFRKKAEIEMDYSRNLEKLAEHFLAKTRSTKDQQFKKDQNVLSPVNCWNLLLNQVKWESRDHTTLSDIYLNNIIPRFVQVSEDSGRLFKKSKEVGQQLQDDLMKVLNELYSVMKTYHMYNADSISAQSKLKEAEKQEEKQIGKSVKQEDRQTPCSPDSTANVRIEEKHVRRSSVKKIEKMKEKHQAKYTENKLKAIKAQNEYLLALEATNASVFKYYIHDLSDLIDQCCDLGYHASLNRALRTFLSAELNLEQSKHEGLDAIENAVENLDATSDKQRLMEMYNNVFCPPMKFEFQPHMGDMASQLCAQQPVQSELVQRCQQLQSRLSTLKIENEEVKKTMEATLQTIQDIVTVEDFDVSDCFQYSNSMESVKSTVSETFMSKPSIAKRRANQQETEQFYFTVRECYGF.

One can recognise an F-BAR domain in the interval 22–325 (KEIRAQLTEQ…AVENLDATSD (304 aa)). A compositionally biased stretch (basic and acidic residues) spans 181–202 (LKEAEKQEEKQIGKSVKQEDRQ). The disordered stretch occupies residues 181-211 (LKEAEKQEEKQIGKSVKQEDRQTPCSPDSTA). Residues 363–401 (QSELVQRCQQLQSRLSTLKIENEEVKKTMEATLQTIQDI) adopt a coiled-coil conformation.

As to quaternary structure, homodimer. Interacts (via F-BAR domain) with SRGAP2/SRGAP2A (via F-BAR domain); formation of the heterodimer inhibits SRGAP2/SRGAP2A function. As to expression, ubiquitously expressed with higher expression in cerebellum. Probably expressed in fetal and adult neurons (at protein level).

Human-specific protein that acts as a key modifier of cortical connectivity in the human brain. Acts by inhibiting the functions of ancestral paralog SRGAP2/SRGAP2A, a postsynaptic protein that regulates excitatory and inhibitory synapse maturation and density in cortical pyramidal neurons. SRGAP2C is unstable but is able to heterodimerize with SRGAP2/SRGAP2A, thereby reducing SRGAP2/SRGAP2A levels through proteasome-dependent degradation. Inhibition of SRGAP2/SRGAP2A by SRGAP2C leads to an increase in synaptic density and protracted synaptic maturation of both excitatory and inhibitory synapses. Modifies cortical circuit connectivity by increasing the number of local and long-range cortical inputs received by layer 2/3 pyramidal neurons. Also able to increase the probability of sensory-evoked responses by layer 2/3 pyramidal neurons. The chain is SLIT-ROBO Rho GTPase-activating protein 2C from Homo sapiens (Human).